The chain runs to 1773 residues: ATP-binding cassette sub-family A member 17 (1773 aa).

A run of 3 helical transmembrane segments spans residues Thr22–Leu42, Phe262–Leu282, and Ala306–Phe326. Residue Asn340 is glycosylated (N-linked (GlcNAc...) asparagine). The next 4 membrane-spanning stretches (helical) occupy residues Thr342–Met362, Gly372–Phe392, Ile403–Phe423, and Phe444–Leu464. One can recognise an ABC transporter 1 domain in the interval Ile525 to Ile758. Residue Gly561–Thr568 coordinates ATP. N-linked (GlcNAc...) asparagine glycosylation occurs at Asn615. Transmembrane regions (helical) follow at residues Leu912 to Phe932, Leu1088 to Val1108, Leu1134 to Trp1154, Ile1166 to Thr1186, Cys1198 to Val1218, Ile1236 to Phe1256, and Ile1293 to Leu1313. An N-linked (GlcNAc...) asparagine glycan is attached at Asn1340. An ABC transporter 2 domain is found at Leu1369 to Lys1602. Residue Gly1404–Thr1411 participates in ATP binding. The tract at residues Asn1690–Leu1773 is disordered. The span at Ser1700–Ile1710 shows a compositional bias: low complexity. 2 stretches are compositionally biased toward pro residues: residues Ser1711–Pro1740 and Pro1763–Leu1773.

Belongs to the ABC transporter superfamily. ABCA family. Post-translationally, N-glycosylated.

The protein resides in the endoplasmic reticulum membrane. It localises to the cytoplasm. It catalyses the reaction cholesterol(in) + ATP + H2O = cholesterol(out) + ADP + phosphate + H(+). Promotes cholesterol efflux from sperm which renders sperm capable of fertilization. Has also been shown to decrease levels of intracellular esterified neutral lipids including cholesteryl esters, fatty acid esters and triacylglycerols. The protein is ATP-binding cassette sub-family A member 17 of Rattus norvegicus (Rat).